The chain runs to 771 residues: Kinase suppressor of Ras A (771 aa).

Polar residues predominate over residues 152–169; sequence SRTSSGSTDEPSGQSTPA. A disordered region spans residues 152–172; sequence SRTSSGSTDEPSGQSTPAIVT. A Phorbol-ester/DAG-type zinc finger spans residues 215–269; the sequence is PHKWHRSTKFRFSGDAVCHFCQRPLGFGFLNAWEKCRSCKWKVHTQCKGRVGDSC. Disordered stretches follow at residues 290 to 339 and 414 to 433; these read GMWK…ISGN and DSTGSQEVDSEAAPSQEAVD. Over residues 318-331 the composition is skewed to low complexity; sequence SSSSTNSSAPSTPA. The Protein kinase domain maps to 477 to 748; it reads DKQAPIIGRG…TDINLKLTAL (272 aa). ATP is bound by residues 483-491 and lysine 503; that span reads IGRGRFGKV. The Proton acceptor role is filled by aspartate 600.

It belongs to the protein kinase superfamily. TKL Ser/Thr protein kinase family. As to quaternary structure, interacts with mek-2. It depends on Mg(2+) as a cofactor.

The catalysed reaction is L-seryl-[protein] + ATP = O-phospho-L-seryl-[protein] + ADP + H(+). The enzyme catalyses L-threonyl-[protein] + ATP = O-phospho-L-threonyl-[protein] + ADP + H(+). In terms of biological role, serine/threonine-protein kinase which positively regulates Ras-mediated signaling probably acting at the level of let-60/ras or/and lin-45/raf. Involved in sex myoblast migration. Plays a role in responses to M.nematophilum-mediated bacterial infection by promoting tail swelling and preventing constipation. Functions redundantly with ksr-2 in the Ras-mediated regulation of larval survival, the development of excretory canal and in mpk-1 phosphorylation in somatic cells. In addition, involved in determining vulval precursor cell fate during vulval induction independently of its kinase activity. Plays a role in egg-laying. The chain is Kinase suppressor of Ras A from Caenorhabditis elegans.